A 311-amino-acid polypeptide reads, in one-letter code: Ciliary microtubule inner protein 2B (311 aa).

2 disordered regions span residues 64-93 (PFPP…LGDP) and 150-183 (QEGR…APFM).

Belongs to the CIMIP2 family. As to expression, expressed in airway epithelial cells.

The protein localises to the cytoplasm. Its subcellular location is the cytoskeleton. It localises to the cilium axoneme. In terms of biological role, microtubule inner protein (MIP) part of the dynein-decorated doublet microtubules (DMTs) in cilia axoneme, which is required for motile cilia beating. The polypeptide is Ciliary microtubule inner protein 2B (cimip2b) (Xenopus laevis (African clawed frog)).